A 331-amino-acid polypeptide reads, in one-letter code: Nucleotide sugar transporter SLC35B4 (331 aa).

The next 11 helical transmembrane spans lie at 4-24, 30-50, 59-79, 92-112, 117-137, 153-173, 201-221, 229-249, 251-267, 268-288, and 291-311; these read ALAV…LELL, GCGN…GFLF, PAIP…VSVV, LHMI…IIIL, SIFK…CTFM, GFQA…ALLM, ALPL…AVLF, IPGI…NIIT, YVCI…CASL, TVTL…ILYF, and PFTL…LMYT. The Mediates endoplasmic reticulum retention motif lies at 326–331; sequence KDNKKN.

It belongs to the nucleotide-sugar transporter family. SLC35B subfamily.

It localises to the endoplasmic reticulum membrane. The catalysed reaction is UDP-N-acetyl-alpha-D-glucosamine(in) + UDP-alpha-D-glucuronate(out) = UDP-N-acetyl-alpha-D-glucosamine(out) + UDP-alpha-D-glucuronate(in). It carries out the reaction UDP-alpha-D-xylose(in) + UDP-alpha-D-glucuronate(out) = UDP-alpha-D-xylose(out) + UDP-alpha-D-glucuronate(in). In terms of biological role, antiporter that transports nucleotide sugars across the endoplasmic reticulum (ER) membrane in exchange for another nucleotide sugar. May couple UDP-alpha-D-glucuronate (UDP-GlcA) or UDP-alpha-D-xylose (UDP-Xyl) efflux to UDP-alpha-D-glucuronate (UDP-GlcA) influx into the ER lumen, which in turn stimulates glucuronidation and excretion of endobiotics and xenobiotics. The chain is Nucleotide sugar transporter SLC35B4 (SLC35B4) from Macaca fascicularis (Crab-eating macaque).